The primary structure comprises 288 residues: Diaminopimelate epimerase (288 aa).

Positions 14 and 67 each coordinate substrate. Cysteine 76 acts as the Proton donor in catalysis. Substrate-binding positions include glycine 77–asparagine 78, asparagine 166, asparagine 199, and glutamate 217–arginine 218. Cysteine 226 functions as the Proton acceptor in the catalytic mechanism. Glycine 227–threonine 228 is a substrate binding site.

Belongs to the diaminopimelate epimerase family. As to quaternary structure, homodimer.

It is found in the cytoplasm. The catalysed reaction is (2S,6S)-2,6-diaminopimelate = meso-2,6-diaminopimelate. Its pathway is amino-acid biosynthesis; L-lysine biosynthesis via DAP pathway; DL-2,6-diaminopimelate from LL-2,6-diaminopimelate: step 1/1. In terms of biological role, catalyzes the stereoinversion of LL-2,6-diaminopimelate (L,L-DAP) to meso-diaminopimelate (meso-DAP), a precursor of L-lysine and an essential component of the bacterial peptidoglycan. In Bacillus cereus (strain B4264), this protein is Diaminopimelate epimerase.